A 480-amino-acid polypeptide reads, in one-letter code: Proline--tRNA ligase (480 aa).

The protein belongs to the class-II aminoacyl-tRNA synthetase family. ProS type 3 subfamily. In terms of assembly, homodimer.

Its subcellular location is the cytoplasm. It carries out the reaction tRNA(Pro) + L-proline + ATP = L-prolyl-tRNA(Pro) + AMP + diphosphate. Its function is as follows. Catalyzes the attachment of proline to tRNA(Pro) in a two-step reaction: proline is first activated by ATP to form Pro-AMP and then transferred to the acceptor end of tRNA(Pro). This Roseiflexus sp. (strain RS-1) protein is Proline--tRNA ligase.